We begin with the raw amino-acid sequence, 568 residues long: Peptidoglycan D,D-transpeptidase FtsI (568 aa).

Residues 19–39 (FVTLCSIVFLFLVILTLRIIF) form a helical membrane-spanning segment. The Acyl-ester intermediate role is filled by Ser-302.

It belongs to the transpeptidase family. FtsI subfamily.

It is found in the cell inner membrane. It catalyses the reaction Preferential cleavage: (Ac)2-L-Lys-D-Ala-|-D-Ala. Also transpeptidation of peptidyl-alanyl moieties that are N-acyl substituents of D-alanine.. The protein operates within cell wall biogenesis; peptidoglycan biosynthesis. In terms of biological role, catalyzes cross-linking of the peptidoglycan cell wall at the division septum. The polypeptide is Peptidoglycan D,D-transpeptidase FtsI (Buchnera aphidicola subsp. Schizaphis graminum (strain Sg)).